Here is a 378-residue protein sequence, read N- to C-terminus: MKHSVHFGAGNIGRGFIGEILFKNGFHIDFVDVNNQIIHALNEKGKYEIEIAQKGQSRIEVTNVAGINSKEHPEQVIEAIQRTDIITTAIGPNILPFIAELLAKGIEARRVAGNTQALDVMACKNMIGGSQFLYQEVKKYLSPEGLTFADNYIGFPNAAVDRIVPAQSHEDSLFVVVEPFNEWVVETKRLKNPDLRLKDVHYEEDLEPFIERKLFSVNSGHATSAYIGAHYGAKTILEALQNPNIKSRIESVLAEIRSLLIAKWNFDKKELENYHKVIIERFENPFIVDEVSRVARTPIRKLGYNERFIRPIRELKELSLSYKNLLKTVGYAFDYRDVNDEESIRLGELLAKQSVKDVVIQVTGLDDQELIDQIVEYI.

Position 4–15 (4–15) interacts with NAD(+); it reads SVHFGAGNIGRG.

It belongs to the mannitol dehydrogenase family.

It carries out the reaction D-mannitol 1-phosphate + NAD(+) = beta-D-fructose 6-phosphate + NADH + H(+). In Streptococcus pneumoniae (strain 70585), this protein is Mannitol-1-phosphate 5-dehydrogenase.